The following is a 77-amino-acid chain: MSDIADRVKKIVVEHLGVEEEKVTENASFIDDLGADSLDTVELVMAFEEEFGIEIPDDAAETIQTFGDAVKFISEAA.

Positions 2–77 (SDIADRVKKI…DAVKFISEAA (76 aa)) constitute a Carrier domain. At Ser37 the chain carries O-(pantetheine 4'-phosphoryl)serine.

The protein belongs to the acyl carrier protein (ACP) family. In terms of processing, 4'-phosphopantetheine is transferred from CoA to a specific serine of apo-ACP by AcpS. This modification is essential for activity because fatty acids are bound in thioester linkage to the sulfhydryl of the prosthetic group.

It is found in the cytoplasm. Its pathway is lipid metabolism; fatty acid biosynthesis. Its function is as follows. Carrier of the growing fatty acid chain in fatty acid biosynthesis. This Cereibacter sphaeroides (strain ATCC 17029 / ATH 2.4.9) (Rhodobacter sphaeroides) protein is Acyl carrier protein.